We begin with the raw amino-acid sequence, 902 residues long: 3'-5' exonuclease DinG (902 aa).

The Exonuclease domain maps to 8–161 (VVDLETTGNQ…DEDATTTAKL (154 aa)). Residues 241-496 (KNVTQSLNLT…KAVDKLEQQR (256 aa)) form the Helicase ATP-binding domain. Residue 276 to 283 (APLGSGKS) participates in ATP binding. Residues 448-451 (DEAH) carry the DEAH box motif. The 170-residue stretch at 714 to 883 (YIVEYITVTQ…HFKQRKGNIK (170 aa)) folds into the Helicase C-terminal domain.

The protein belongs to the helicase family. DinG subfamily. Type 2 sub-subfamily.

Its function is as follows. 3'-5' exonuclease. This Staphylococcus epidermidis (strain ATCC 35984 / DSM 28319 / BCRC 17069 / CCUG 31568 / BM 3577 / RP62A) protein is 3'-5' exonuclease DinG.